The following is a 548-amino-acid chain: Poly(ADP-ribose) glycohydrolase 1 (548 aa).

It belongs to the poly(ADP-ribose) glycohydrolase family.

It carries out the reaction [(1''-&gt;2')-ADP-alpha-D-ribose](n) + H2O = [(1''-&gt;2')-ADP-alpha-D-ribose](n-1) + ADP-D-ribose. Its function is as follows. Poly(ADP-ribose) synthesized after DNA damage is only present transiently and is rapidly degraded by poly(ADP-ribose) glycohydrolase. Involved in establishing period length of the circadian oscillator. May regulate post-translational poly(ADP-ribosyl)ation of an oscillator component. This chain is Poly(ADP-ribose) glycohydrolase 1 (PARG1), found in Arabidopsis thaliana (Mouse-ear cress).